The following is a 901-amino-acid chain: MLIPSKLSRPVRLDHTVVRERLLAKLSGANNFRLALITSPAGYGKTTLISQWAAGKNDIGWYSLDEGDNQQERFASYLIAAVQQATNGHCAICETMAQKRQYASLTSLFAQLFIELAEWHSPLYLVIDDYHLITNPVIHESMRFFIRHQPENLTLVVLSRNLPQLGIANLRVRDQLLEIGSQQLAFTHQEAKQFFDCRLSSPIEAAESSWICDDVSGWATALQLIALSARQNTHSAHKSARRLAGINASHLSDYLVDEVLDNVDLATRHFLLKSAILRSMNDALITRVTGEENGQMRLEEIERQGLFLQRMDDTGEWFCYHPLFGNFLRQRCQWELAAELPEIHRAAAESWMAQGFPSEAIHHALAAGDALMLRDILLNHAWSLFNHSELSLLEESLKALPWDSLLENPQLVLLQAWLMQSQHRYGEVNTLLARAEHEIKDIREGTMHAEFNALRAQVAINDGNPDEAERLAKLALEELPPGWFYSRIVATSVLGEVLHCKGELTRSLALMQQTEQMARQHDVWHYALWSLIQQSEILFAQGFLQTAWETQEKTFQLINEQHLEQLPMHEFLVRIRAQLLWAWARLDEAEASARSGIEVLSSYQPQQQLQCLAMLIQCSLARGDLDNARSQLNRLENLLGNGKYHSDWISNANKVRVIYWQMTGDKAAAANWLRHTAKPEFANNHFLQGQWRNIARAQILLGEFEPAEIVLEELNENARSLRLMSDLNRNLLLLNQLYWQAGRKSDAQRVLLDALKLANRTGFISHFVIEGEAMAQQLRQLIQLNTLPELEQHRAQRILREINQHHRHKFAHFDENFVERLLNHPEVPELIHTSPLTQREWQVLGLIYSGYSNEQIAGELEVAATTIKTHIRNLYQKLGVAHRQAAVQHAQKLLKMMGYGV.

An ATP-binding site is contributed by 39-46 (SPAGYGKT). The HTH luxR-type domain occupies 829-894 (ELIHTSPLTQ…AAVQHAQKLL (66 aa)). A DNA-binding region (H-T-H motif) is located at residues 853-872 (NEQIAGELEVAATTIKTHIR).

Belongs to the MalT family. As to quaternary structure, monomer in solution. Oligomerizes to an active state in the presence of the positive effectors ATP and maltotriose.

Its activity is regulated as follows. Activated by ATP and maltotriose, which are both required for DNA binding. Positively regulates the transcription of the maltose regulon whose gene products are responsible for uptake and catabolism of malto-oligosaccharides. Specifically binds to the promoter region of its target genes, recognizing a short DNA motif called the MalT box. In Shigella sonnei (strain Ss046), this protein is HTH-type transcriptional regulator MalT.